The chain runs to 619 residues: MLLVRQLFGASANSWARALIIFVLAWIGLVYVFVVKLTNTQGQQAAGESELNARRISQALQMLEHTRQRNEELKQLIDELMSDQLDKQSAMKLVQRLENDALNPKLAPEVAGPEPESMFESAPADLRGWNNVAEGAPNDLEAGVPDHGEFEPSLEYEFTRRRIQTNIGEIWNFFSSELGKVRKAVAAGHASADLEESINQVLLQGAEHKRSLLSDMERMRQSDGYEAWRHKEARDLSDLVQRRLHHLQNPSDCQNARKLVCKLNKGCGYGCQLHHVVYCFIVAYATERTLILKSRGWRYHKGGWEEVFQPVSNSCHDAGTANTYNWPGKPNTQVLVLPIIDSLMPRPPYLPLAVPEDLAPRLKRLHGDPIVWWVGQFLKYLLRPQPTTRDFLTSGMRNLGWERPIVGVHVRRTDKVGTEAACHSVEEYMTYVEDYYRTLEVNGSTVARRIFLASDDAQVIEEARRKYPQYQIIGDPEVARMASVSTRYTDTALNGIILDIHLLSMSDHLVCTFSSQVCRVAYEIMQTMYPDAAHRFKSLDDIYYYGGQNAHNRRVVIAHKPRTHEDLQLRVGDLVSVAGNHWDGNSKGKNTRTNQGGLFPSFKVEEKVDTAKLPLYAGI.

Residues 1 to 17 (MLLVRQLFGASANSWAR) are Cytoplasmic-facing. Residues 18–38 (ALIIFVLAWIGLVYVFVVKLT) traverse the membrane as a helical; Signal-anchor for type II membrane protein segment. At 39–619 (NTQGQQAAGE…TAKLPLYAGI (581 aa)) the chain is on the lumenal side. 3 disulfide bridges follow: Cys-253–Cys-315, Cys-261–Cys-279, and Cys-267–Cys-271. The region spanning 255–539 (NARKLVCKLN…PDAAHRFKSL (285 aa)) is the GT23 domain. The SH3-binding signature appears at 345–351 (PRPPYLP). The important for donor substrate binding stretch occupies residues 411 to 412 (RR). The cysteines at positions 511 and 518 are disulfide-linked. Residues 548–609 (QNAHNRRVVI…PSFKVEEKVD (62 aa)) enclose the SH3 domain.

The protein belongs to the glycosyltransferase 23 family. Requires Mn(2+) as cofactor. The cofactor is Mg(2+).

The protein localises to the golgi apparatus. It localises to the golgi stack membrane. The enzyme catalyses N(4)-{beta-D-GlcNAc-(1-&gt;2)-alpha-D-Man-(1-&gt;3)-[beta-D-GlcNAc-(1-&gt;2)-alpha-D-Man-(1-&gt;6)]-beta-D-Man-(1-&gt;4)-beta-D-GlcNAc-(1-&gt;4)-beta-D-GlcNAc}-L-asparaginyl-[protein] + GDP-beta-L-fucose = an N(4)-{beta-D-GlcNAc-(1-&gt;2)-alpha-D-Man-(1-&gt;3)-[beta-D-GlcNAc-(1-&gt;2)-alpha-D-Man-(1-&gt;6)]-beta-D-Man-(1-&gt;4)-beta-D-GlcNAc-(1-&gt;4)-[alpha-L-Fuc-(1-&gt;6)]-beta-D-GlcNAc}-L-asparaginyl-[protein] + GDP + H(+). It functions in the pathway protein modification; protein glycosylation. In terms of biological role, catalyzes the addition of fucose in alpha 1-6 linkage to the first GlcNAc residue, next to the peptide chains in N-glycans. The addition is prevented if the GlcNAc residue is already fucosylated. The polypeptide is Alpha-(1,6)-fucosyltransferase (FucT6) (Drosophila melanogaster (Fruit fly)).